The following is a 271-amino-acid chain: Formamidopyrimidine-DNA glycosylase (271 aa).

Catalysis depends on Pro2, which acts as the Schiff-base intermediate with DNA. The active-site Proton donor is Glu3. Residue Lys56 is the Proton donor; for beta-elimination activity of the active site. DNA contacts are provided by His89, Arg107, and Lys151. Residues 236 to 270 form an FPG-type zinc finger; sequence NVYGRAGLQCRQCGTPVRLSRQGQRSTYFCPHCQR. The active-site Proton donor; for delta-elimination activity is Arg260.

The protein belongs to the FPG family. In terms of assembly, monomer. Zn(2+) is required as a cofactor.

It catalyses the reaction Hydrolysis of DNA containing ring-opened 7-methylguanine residues, releasing 2,6-diamino-4-hydroxy-5-(N-methyl)formamidopyrimidine.. The catalysed reaction is 2'-deoxyribonucleotide-(2'-deoxyribose 5'-phosphate)-2'-deoxyribonucleotide-DNA = a 3'-end 2'-deoxyribonucleotide-(2,3-dehydro-2,3-deoxyribose 5'-phosphate)-DNA + a 5'-end 5'-phospho-2'-deoxyribonucleoside-DNA + H(+). Functionally, involved in base excision repair of DNA damaged by oxidation or by mutagenic agents. Acts as a DNA glycosylase that recognizes and removes damaged bases. Has a preference for oxidized purines, such as 7,8-dihydro-8-oxoguanine (8-oxoG). Has AP (apurinic/apyrimidinic) lyase activity and introduces nicks in the DNA strand. Cleaves the DNA backbone by beta-delta elimination to generate a single-strand break at the site of the removed base with both 3'- and 5'-phosphates. In Acidovorax ebreus (strain TPSY) (Diaphorobacter sp. (strain TPSY)), this protein is Formamidopyrimidine-DNA glycosylase.